We begin with the raw amino-acid sequence, 117 residues long: Calcitonin receptor-stimulating peptide 2 (117 aa).

Positions 1–25 (MGFWKFPPFLVLSILVLYQAGMFHT) are cleaved as a signal peptide. Positions 26–79 (APVRLPLESSFDSATLTEEEVSLLLVAMVKDYVQMKATVLEQESEDFSITAQEK) are excised as a propeptide. A disulfide bridge connects residues cysteine 81 and cysteine 86.

This sequence belongs to the calcitonin family. Mainly expressed in the thyroid gland and CNS. Found in the nerve cells of the cerebrum, hippocampus, hypothalamus, pons/midbrain and thalamus. Also detected in the glia-like cells of pons/midbrain and in meninx of tactus opticus.

Its subcellular location is the secreted. In Sus scrofa (Pig), this protein is Calcitonin receptor-stimulating peptide 2 (CRSP2).